The primary structure comprises 502 residues: Archaemetzincin-1 (502 aa).

His262 is a binding site for Zn(2+). Residue Glu263 is the Proton acceptor of the active site. The Zn(2+) site is built by His266, Cys273, Cys278, Cys297, and Cys300. Residues 336–383 are disordered; the sequence is GEPSVSEDTLPFSADSGMGCESDTEPVTSPSEPVTPDGWSHPFPDGPE.

The protein belongs to the peptidase M54 family. It depends on Zn(2+) as a cofactor.

Functionally, probable zinc metalloprotease. This is Archaemetzincin-1 (Amz1) from Mus musculus (Mouse).